The sequence spans 245 residues: MDAGVWYRSLPRFTRYWLTATVVLSMLCRFDVIPLHWLHLDRSAVFSKLQLWRCMTSLFVFPISSNTAFHFLINCFFIVQYSSKLEKDQYSRSPADYLYLLIVSAVLANIGGMIFNVYFLMDTLVLAITYIWCQLNKDVTVSFWFGTRFKAMYLPWVLAAFEFIFHFSLASLVGIFVGHVYYFFKFQYSQDLGGTPLLETPQFLKRLVPDVSGGFGGFGLPPESRAPPRQATESPWGRGMTLGRN.

Residues 1 to 17 lie on the Cytoplasmic side of the membrane; that stretch reads MDAGVWYRSLPRFTRYW. A helical membrane pass occupies residues 18–38; it reads LTATVVLSMLCRFDVIPLHWL. Over 39-58 the chain is Lumenal; sequence HLDRSAVFSKLQLWRCMTSL. A helical transmembrane segment spans residues 59–79; it reads FVFPISSNTAFHFLINCFFIV. Over 80 to 99 the chain is Cytoplasmic; sequence QYSSKLEKDQYSRSPADYLY. The chain crosses the membrane as a helical span at residues 100–120; it reads LLIVSAVLANIGGMIFNVYFL. The Lumenal portion of the chain corresponds to 121 to 156; it reads MDTLVLAITYIWCQLNKDVTVSFWFGTRFKAMYLPW. Residues 157-177 traverse the membrane as a helical segment; sequence VLAAFEFIFHFSLASLVGIFV. Residues 178 to 245 are Cytoplasmic-facing; the sequence is GHVYYFFKFQ…WGRGMTLGRN (68 aa). The tract at residues 218–245 is disordered; sequence FGLPPESRAPPRQATESPWGRGMTLGRN.

This sequence belongs to the derlin family.

The protein localises to the endoplasmic reticulum membrane. Its function is as follows. May be involved in the degradation process of specific misfolded endoplasmic reticulum (ER) luminal proteins. May also involved in endoplasmic reticulum stress-induced pre-emptive quality control, a mechanism that selectively attenuates the translocation of newly synthesized proteins into the endoplasmic reticulum and reroutes them to the cytosol for proteasomal degradation. The protein is Derlin-1 of Drosophila melanogaster (Fruit fly).